Reading from the N-terminus, the 302-residue chain is tRNA pseudouridine synthase B (302 aa).

Asp45 serves as the catalytic Nucleophile.

It belongs to the pseudouridine synthase TruB family. Type 1 subfamily.

It catalyses the reaction uridine(55) in tRNA = pseudouridine(55) in tRNA. In terms of biological role, responsible for synthesis of pseudouridine from uracil-55 in the psi GC loop of transfer RNAs. The sequence is that of tRNA pseudouridine synthase B from Francisella tularensis subsp. novicida (strain U112).